A 350-amino-acid chain; its full sequence is tRNA uridine(34) hydroxylase (350 aa).

A Rhodanese domain is found at 146–240 (DDPDALFIDM…YARKAREQGL (95 aa)). The active-site Cysteine persulfide intermediate is Cys-200.

Belongs to the TrhO family.

It catalyses the reaction uridine(34) in tRNA + AH2 + O2 = 5-hydroxyuridine(34) in tRNA + A + H2O. Functionally, catalyzes oxygen-dependent 5-hydroxyuridine (ho5U) modification at position 34 in tRNAs, the first step in 5-carboxymethoxyuridine (cmo5U) biosynthesis. May be part of an alternate pathway, which is able to bypass cmo5U biogenesis in a subset of tRNAs under aerobic conditions. This Escherichia coli O17:K52:H18 (strain UMN026 / ExPEC) protein is tRNA uridine(34) hydroxylase.